A 316-amino-acid chain; its full sequence is Olfactory receptor 5AP2 (316 aa).

Topologically, residues 1–34 (MRLMKEVRGRNQTEVTEFLLLGLSDNPDLQGVLF) are extracellular. Asn11 carries an N-linked (GlcNAc...) asparagine glycan. Residues 35–55 (ALFLLIYMANMVGNLGMIVLI) traverse the membrane as a helical segment. Residue Lys56 is a topological domain, cytoplasmic. The chain crosses the membrane as a helical span at residues 57 to 77 (IDLCLHTPMYFFLSSLSFVDA). Residues 78–104 (SYSSSVTPKMLVNLMAENKAISFHGCA) lie on the Extracellular side of the membrane. Cys103 and Cys195 are disulfide-bonded. A helical transmembrane segment spans residues 105–125 (AQFYFFGSFLGTECFLLAMMA). Residues 126–135 (YDRYAAIWNP) lie on the Cytoplasmic side of the membrane. The chain crosses the membrane as a helical span at residues 136-156 (LLYPVLVSGRICFLLIATSFL). Residues 157–210 (AGCGNAAIHTGMTFRLSFCGSNRINHFYCDTPPLLKLSCSDTHFNGIVIMAFSS) are Extracellular-facing. The helical transmembrane segment at 211 to 231 (FIVISCVMIVLISYLCIFIAV) threads the bilayer. Topologically, residues 232–245 (LKMPSLEGRHKAFS) are cytoplasmic. The helical transmembrane segment at 246 to 266 (TCASYLMAVTIFFGTILFMYL) threads the bilayer. Residues 267-278 (RPTSSYSMEQDK) are Extracellular-facing. Residues 279–299 (VVSVFYTVIIPVLNPLIYSLK) form a helical membrane-spanning segment. Residues 300–316 (NKDVKKALKKILWKHIL) are Cytoplasmic-facing.

Belongs to the G-protein coupled receptor 1 family.

The protein localises to the cell membrane. Odorant receptor. This Homo sapiens (Human) protein is Olfactory receptor 5AP2.